The sequence spans 492 residues: GDP-Man:Man(3)GlcNAc(2)-PP-Dol alpha-1,2-mannosyltransferase (492 aa).

Topologically, residues 1–19 (MAAGERSWCLCKLLRFFYS) are lumenal. The chain crosses the membrane as a helical span at residues 20–40 (LFFPGLIVCGTLCVCLVIVLW). Topologically, residues 41-233 (GIRLLLQRKK…TRNPFLSKVK (193 aa)) are cytoplasmic. The helical intramembrane region spans 234–254 (LIYYYLFAFIYGLVGSCSDVV). Residues 255 to 399 (MVNSSWTLNH…IGLHTMWNEH (145 aa)) lie on the Cytoplasmic side of the membrane. An intramembrane region (helical) is located at residues 400 to 420 (FGIGVVECMAAGTIILAHNSG). The Cytoplasmic segment spans residues 421–492 (GPKLDIVVPH…FLSSVEKLFK (72 aa)).

It belongs to the glycosyltransferase group 1 family. Glycosyltransferase 4 subfamily.

Its subcellular location is the endoplasmic reticulum membrane. It catalyses the reaction an alpha-D-Man-(1-&gt;3)-[alpha-D-Man-(1-&gt;6)]-beta-D-Man-(1-&gt;4)-beta-D-GlcNAc-(1-&gt;4)-alpha-D-GlcNAc-diphospho-di-trans,poly-cis-dolichol + 2 GDP-alpha-D-mannose = an alpha-D-Man-(1-&gt;2)-alpha-D-Man-(1-&gt;2)-alpha-D-Man-(1-&gt;3)-[alpha-D-Man-(1-&gt;6)]-beta-D-Man-(1-&gt;4)-beta-D-GlcNAc-(1-&gt;4)-alpha-D-GlcNAc-diphospho-di-trans,poly-cis-dolichol + 2 GDP + 2 H(+). The protein operates within protein modification; protein glycosylation. In terms of biological role, GDP-Man:Man(3)GlcNAc(2)-PP-Dol alpha-1,2-mannosyltransferase that operates in the biosynthetic pathway of dolichol-linked oligosaccharides, the glycan precursors employed in protein asparagine (N)-glycosylation. The assembly of dolichol-linked oligosaccharides begins on the cytosolic side of the endoplasmic reticulum membrane and finishes in its lumen. The sequential addition of sugars to dolichol pyrophosphate produces dolichol-linked oligosaccharides containing fourteen sugars, including two GlcNAcs, nine mannoses and three glucoses. Once assembled, the oligosaccharide is transferred from the lipid to nascent proteins by oligosaccharyltransferases. Catalyzes, on the cytoplasmic face of the endoplasmic reticulum, the addition of the fourth and fifth mannose residues to the dolichol-linked oligosaccharide chain, to produce Man(5)GlcNAc(2)-PP-dolichol core oligosaccharide. Man(5)GlcNAc(2)-PP-dolichol is a substrate for ALG3, the following enzyme in the biosynthetic pathway. This chain is GDP-Man:Man(3)GlcNAc(2)-PP-Dol alpha-1,2-mannosyltransferase, found in Homo sapiens (Human).